We begin with the raw amino-acid sequence, 696 residues long: DNA topoisomerase 6 subunit B (696 aa).

Residues 1 to 36 (MDDDAGDGAASGGTKRKVTAASSSAAAKGKAAGKGK) are disordered. The segment covering 20–36 (AASSSAAAKGKAAGKGK) has biased composition (low complexity). ATP contacts are provided by residues Asn-88, Asp-187, 208–209 (TK), 217–224 (GKFGLGAK), and Lys-543.

Belongs to the TOP6B family. Homodimer. Heterotetramer of two TOP6A and two TOP6B subunits. Interacts with SPO11-2 and TOP6A3. In terms of tissue distribution, highly expressed in flowers before pollination. Expressed in roots and shoots.

The protein resides in the nucleus. The catalysed reaction is ATP-dependent breakage, passage and rejoining of double-stranded DNA.. Its function is as follows. Component of the DNA topoisomerase VI involved in chromatin organization and progression of endoreduplication cycles. Relaxes both positive and negative superturns and exhibits a strong decatenase activity. The B subunit binds ATP. May be involved in cell proliferation and stress tolerance. This chain is DNA topoisomerase 6 subunit B, found in Oryza sativa subsp. indica (Rice).